A 1313-amino-acid polypeptide reads, in one-letter code: Mitogen-activated protein kinase kinase kinase 15 (1313 aa).

Residues 1–58 form a disordered region; sequence MESGGGNAPAGALGAASESPQCPPPPGVEGAAGPAEPDGAAEGAAGGSGEGESGGGPR. The segment covering 28–43 has biased composition (low complexity); it reads VEGAAGPAEPDGAAEG. A compositionally biased stretch (gly residues) spans 44 to 57; the sequence is AAGGSGEGESGGGP. The Protein kinase domain maps to 652–908; that stretch reads NGERVVLGKG…TAELLREGFL (257 aa). ATP contacts are provided by residues 658–666 and lysine 681; that span reads LGKGTYGIV. The active-site Proton acceptor is aspartate 773. The segment at 939–958 is disordered; that stretch reads EPMATSSSEHGSVSPDSDAQ. Positions 942-955 are enriched in polar residues; the sequence is ATSSSEHGSVSPDS. At serine 994 the chain carries Phosphoserine. The stretch at 1179–1225 forms a coiled coil; the sequence is QLGELRQETNRLLEHLVEKEREYQNLLRQTLEQKTQELYHLQLKLKS.

This sequence belongs to the protein kinase superfamily. STE Ser/Thr protein kinase family. MAP kinase kinase kinase subfamily. Mg(2+) is required as a cofactor. As to expression, isoform 2 and isoform 3 are widely expressed. Isoform 2 highest levels are observed in fetal brain, and isoform 3 highest levels in pancreas, peripheral blood leukocytes, fetal brain and spleen.

It catalyses the reaction L-seryl-[protein] + ATP = O-phospho-L-seryl-[protein] + ADP + H(+). It carries out the reaction L-threonyl-[protein] + ATP = O-phospho-L-threonyl-[protein] + ADP + H(+). Contains an N-terminal autoinhibitory domain. Activated by phosphorylation at Thr-812, inhibited by phosphorylation at Ser-924 and Ser-994. Functionally, serine/threonine kinase which acts as a component of the MAP kinase signal transduction pathway. Once activated, acts as an upstream activator of the p38 MAPK signal transduction cascade through the phosphorylation and activation of several MAP kinase kinases. May function in a signal transduction pathway that is activated by various cell stresses and leads to apoptosis. Involved in phosphorylation of WNK4 in response to osmotic stress or hypotonic low-chloride stimulation via the p38 MAPK signal transduction cascade. In Homo sapiens (Human), this protein is Mitogen-activated protein kinase kinase kinase 15 (MAP3K15).